The following is a 758-amino-acid chain: 5-methyltetrahydropteroyltriglutamate--homocysteine methyltransferase (758 aa).

5-methyltetrahydropteroyltri-L-glutamate contacts are provided by residues 17-20 and Lys-117; that span reads RELK. L-homocysteine is bound by residues 434–436 and Glu-487; that span reads IGS. Residues 434 to 436 and Glu-487 contribute to the L-methionine site; that span reads IGS. 5-methyltetrahydropteroyltri-L-glutamate contacts are provided by residues 518 to 519 and Trp-564; that span reads RC. Residue Asp-602 participates in L-homocysteine binding. Asp-602 is an L-methionine binding site. A 5-methyltetrahydropteroyltri-L-glutamate-binding site is contributed by Glu-608. 3 residues coordinate Zn(2+): His-644, Cys-646, and Glu-668. The Proton donor role is filled by His-697. Residue Cys-729 participates in Zn(2+) binding.

It belongs to the vitamin-B12 independent methionine synthase family. Zn(2+) serves as cofactor.

The enzyme catalyses 5-methyltetrahydropteroyltri-L-glutamate + L-homocysteine = tetrahydropteroyltri-L-glutamate + L-methionine. It functions in the pathway amino-acid biosynthesis; L-methionine biosynthesis via de novo pathway; L-methionine from L-homocysteine (MetE route): step 1/1. Catalyzes the transfer of a methyl group from 5-methyltetrahydrofolate to homocysteine resulting in methionine formation. This Yersinia pestis (strain Pestoides F) protein is 5-methyltetrahydropteroyltriglutamate--homocysteine methyltransferase.